A 264-amino-acid chain; its full sequence is Phosphatidylglycerol--prolipoprotein diacylglyceryl transferase (264 aa).

The next 4 helical transmembrane spans lie at 17–37, 57–77, 89–109, and 118–138; these read LAIH…YLLG, LIFY…VLFY, IAFL…VILV, and GVSF…GLGA. A 1,2-diacyl-sn-glycero-3-phospho-(1'-sn-glycerol) is bound at residue Arg-140. Transmembrane regions (helical) follow at residues 173-193, 201-221, and 237-257; these read PSQL…LWWF, GQVS…VEFT, and MGQW…VLTA.

Belongs to the Lgt family.

It is found in the cell inner membrane. The catalysed reaction is L-cysteinyl-[prolipoprotein] + a 1,2-diacyl-sn-glycero-3-phospho-(1'-sn-glycerol) = an S-1,2-diacyl-sn-glyceryl-L-cysteinyl-[prolipoprotein] + sn-glycerol 1-phosphate + H(+). It functions in the pathway protein modification; lipoprotein biosynthesis (diacylglyceryl transfer). Its function is as follows. Catalyzes the transfer of the diacylglyceryl group from phosphatidylglycerol to the sulfhydryl group of the N-terminal cysteine of a prolipoprotein, the first step in the formation of mature lipoproteins. This chain is Phosphatidylglycerol--prolipoprotein diacylglyceryl transferase, found in Bordetella avium (strain 197N).